Reading from the N-terminus, the 398-residue chain is Phosphoglycerate kinase (398 aa).

Substrate contacts are provided by residues 21–23, R36, 59–62, R119, and R157; these read DFN and HLGR. Residues K208, G296, E327, and 354–357 each bind ATP; that span reads GGDS.

This sequence belongs to the phosphoglycerate kinase family. In terms of assembly, monomer.

The protein resides in the cytoplasm. The enzyme catalyses (2R)-3-phosphoglycerate + ATP = (2R)-3-phospho-glyceroyl phosphate + ADP. It participates in carbohydrate degradation; glycolysis; pyruvate from D-glyceraldehyde 3-phosphate: step 2/5. This Streptococcus equi subsp. zooepidemicus (strain MGCS10565) protein is Phosphoglycerate kinase.